The sequence spans 132 residues: Outer membrane protein assembly factor BamE (132 aa).

A signal peptide spans 1–16 (MQKLVLTLLVTSLLAG). Cys-17 carries the N-palmitoyl cysteine lipid modification. A lipid anchor (S-diacylglycerol cysteine) is attached at Cys-17.

Belongs to the BamE family. In terms of assembly, part of the Bam complex.

It localises to the cell outer membrane. Part of the outer membrane protein assembly complex, which is involved in assembly and insertion of beta-barrel proteins into the outer membrane. The chain is Outer membrane protein assembly factor BamE from Acinetobacter pittii (strain PHEA-2).